The sequence spans 503 residues: MDFSIKGCDWSKGEAKGFLTGKSDCIVLGIFEAQTLSGAALDIDTATKGLISRVVKAGDMDGKRGKTLFLHEVSGIGASRVLLVGLGKQDAFNQKAYTDAVTAAWRALLSTKIVQVTFTLAQLPVDERSSDWGVRAAILALRNETYRFTQMKSKPEPASHTLKRVVFSVDPADEKAAKLAVKQAVALANGMDLTRDLGNLPGNVCTPTYLGNTAKKIAKDWGLKAEVLGLKQIQALNMGSFLSVARASVEPPQFIVLHYQGAAAKAAPVVLVGKGITFDTGGISLKPGEAMDEMKYDMCGAGSVLGTMRAVAEMGLKINVVAIVPTCENMPGGNATKPGDIVTSMKGLTIEVLNTDAEGRLILCDALTYAERFKPAAVIDVATLTGACVIALGAHNSGLFSKDDALAGELLDASREANDPAWRMPLDDEYQDQLKSNFADIANIGGRPAGAVTAACFLSRFTDSYPWAHLDIAGTAWKGGAAKGATGRPVPLLAQFLIDRAGQ.

Residues Lys274 and Asp279 each coordinate Mn(2+). Lys286 is an active-site residue. The Mn(2+) site is built by Asp297, Asp356, and Glu358. Arg360 is a catalytic residue.

Belongs to the peptidase M17 family. Mn(2+) serves as cofactor.

It localises to the cytoplasm. The enzyme catalyses Release of an N-terminal amino acid, Xaa-|-Yaa-, in which Xaa is preferably Leu, but may be other amino acids including Pro although not Arg or Lys, and Yaa may be Pro. Amino acid amides and methyl esters are also readily hydrolyzed, but rates on arylamides are exceedingly low.. It catalyses the reaction Release of an N-terminal amino acid, preferentially leucine, but not glutamic or aspartic acids.. Its function is as follows. Presumably involved in the processing and regular turnover of intracellular proteins. Catalyzes the removal of unsubstituted N-terminal amino acids from various peptides. In Burkholderia ambifaria (strain MC40-6), this protein is Probable cytosol aminopeptidase.